The sequence spans 359 residues: 3-dehydroquinate synthase (359 aa).

NAD(+)-binding positions include 71–76, 105–109, 129–130, Lys-142, Lys-151, and 169–172; these read DGEAHK, GVIGD, TT, and TLHT. Zn(2+) contacts are provided by Glu-184, His-247, and His-264.

The protein belongs to the sugar phosphate cyclases superfamily. Dehydroquinate synthase family. The cofactor is NAD(+). Co(2+) serves as cofactor. Zn(2+) is required as a cofactor.

It localises to the cytoplasm. It carries out the reaction 7-phospho-2-dehydro-3-deoxy-D-arabino-heptonate = 3-dehydroquinate + phosphate. Its pathway is metabolic intermediate biosynthesis; chorismate biosynthesis; chorismate from D-erythrose 4-phosphate and phosphoenolpyruvate: step 2/7. Catalyzes the conversion of 3-deoxy-D-arabino-heptulosonate 7-phosphate (DAHP) to dehydroquinate (DHQ). In Neisseria meningitidis serogroup B (strain ATCC BAA-335 / MC58), this protein is 3-dehydroquinate synthase.